Consider the following 357-residue polypeptide: GTPase Obg (357 aa).

The Obg domain occupies 1 to 159 (MKFVDEAFID…RNLKLELKVL (159 aa)). The 175-residue stretch at 160 to 334 (ADVGLLGMPN…LVQSIFQHVH (175 aa)) folds into the OBG-type G domain. GTP is bound by residues 166-173 (GMPNAGKS), 191-195 (FTTLH), 213-216 (DIPG), 284-287 (NKLD), and 315-317 (SAL). The Mg(2+) site is built by S173 and T193.

It belongs to the TRAFAC class OBG-HflX-like GTPase superfamily. OBG GTPase family. Monomer. The cofactor is Mg(2+).

Its subcellular location is the cytoplasm. In terms of biological role, an essential GTPase which binds GTP, GDP and possibly (p)ppGpp with moderate affinity, with high nucleotide exchange rates and a fairly low GTP hydrolysis rate. Plays a role in control of the cell cycle, stress response, ribosome biogenesis and in those bacteria that undergo differentiation, in morphogenesis control. The chain is GTPase Obg from Acidovorax ebreus (strain TPSY) (Diaphorobacter sp. (strain TPSY)).